The chain runs to 388 residues: Mannitol-1-phosphate 5-dehydrogenase (388 aa).

3–14 is an NAD(+) binding site; sequence ALHFGAGNIGRG.

It belongs to the mannitol dehydrogenase family.

It catalyses the reaction D-mannitol 1-phosphate + NAD(+) = beta-D-fructose 6-phosphate + NADH + H(+). The chain is Mannitol-1-phosphate 5-dehydrogenase from Buchnera aphidicola subsp. Schizaphis graminum (strain Sg).